The primary structure comprises 518 residues: MSKRALISVSDKEGIVEFAKKIQELGWEIISTGGTKAVLDQEEIPNIAIDEVTGFPEMMDGRVKTLHPLIHGALLGRRDLDSHMKSMAEHHISPIDLVVVNLYPFKETLLAGGSQAEMIEKIDIGGPSMLRSAAKNHAAVTVVCDPMDYEKVEKELSADGETSLELRQQLAAKVFRHTASYDALIAQYLTEEFPVEDTKPEKLTLTYDLKQGMRYGENPQQSADFYESGLPTTYSIAQSHQLHGKELSYNNVRDADAALQIARDFDEPTVVALKHMNPCGIGTAKNIEQAWDYAYEADPVSIFGGIIVLNREVTEETAQKMSKIFLEIIIAPSYSKEALEILSKKKNIRLLTVDFSKKEQSEKEALVTGVLGGLLVQNQDVIVENPKEWTVATKVQPTDRQMEAMKFAWKAVKFVKSNGIIVTNDHQTLGVGPGQTNRVGSVKIALEATADKDALLQENAVLGSDAFFPFADNIDEIAKAGIKAIVQPGGSVRDQEVIEACDKYGIAMVFTGLRHFRH.

The 144-residue stretch at 1-144 (MSKRALISVS…KNHAAVTVVC (144 aa)) folds into the MGS-like domain.

This sequence belongs to the PurH family.

The enzyme catalyses (6R)-10-formyltetrahydrofolate + 5-amino-1-(5-phospho-beta-D-ribosyl)imidazole-4-carboxamide = 5-formamido-1-(5-phospho-D-ribosyl)imidazole-4-carboxamide + (6S)-5,6,7,8-tetrahydrofolate. The catalysed reaction is IMP + H2O = 5-formamido-1-(5-phospho-D-ribosyl)imidazole-4-carboxamide. The protein operates within purine metabolism; IMP biosynthesis via de novo pathway; 5-formamido-1-(5-phospho-D-ribosyl)imidazole-4-carboxamide from 5-amino-1-(5-phospho-D-ribosyl)imidazole-4-carboxamide (10-formyl THF route): step 1/1. It participates in purine metabolism; IMP biosynthesis via de novo pathway; IMP from 5-formamido-1-(5-phospho-D-ribosyl)imidazole-4-carboxamide: step 1/1. In Lactococcus lactis subsp. cremoris (strain MG1363), this protein is Bifunctional purine biosynthesis protein PurH.